The sequence spans 227 residues: MILIEHILGNVKKDPVWRERLKGATFDFLVLDQREAQKSRCRKSSTQGLDLGISLDRNVVLADGDVLSWDEKTNVAVIVQINLRDVMVIDLRELKKRSADELIKTCFELGHALGNQHWKAVTKNNEVYVPLTVATTMMDSVMRTHGFQHLPFRFAKGAEILPLLSNSEARLLFGGAEESDTHVHVASPLDEPHGSGLHVHAIHSHGHSHSHDHDHDHNHDHDHKHKQ.

The interval 192 to 227 (PHGSGLHVHAIHSHGHSHSHDHDHDHNHDHDHKHKQ) is disordered. Over residues 209–221 (HSHDHDHDHNHDH) the composition is skewed to basic and acidic residues.

It belongs to the UreE family.

The protein localises to the cytoplasm. Involved in urease metallocenter assembly. Binds nickel. Probably functions as a nickel donor during metallocenter assembly. The polypeptide is Urease accessory protein UreE (Yersinia bercovieri).